Reading from the N-terminus, the 485-residue chain is Glutamate--tRNA ligase (485 aa).

The 'HIGH' region signature appears at Pro12–Thr22. Positions Lys253–Arg257 match the 'KMSKS' region motif. Residue Lys256 participates in ATP binding.

Belongs to the class-I aminoacyl-tRNA synthetase family. Glutamate--tRNA ligase type 1 subfamily. In terms of assembly, monomer.

It localises to the cytoplasm. It catalyses the reaction tRNA(Glu) + L-glutamate + ATP = L-glutamyl-tRNA(Glu) + AMP + diphosphate. In terms of biological role, catalyzes the attachment of glutamate to tRNA(Glu) in a two-step reaction: glutamate is first activated by ATP to form Glu-AMP and then transferred to the acceptor end of tRNA(Glu). This chain is Glutamate--tRNA ligase, found in Sinorhizobium medicae (strain WSM419) (Ensifer medicae).